A 342-amino-acid polypeptide reads, in one-letter code: N-acetyl-gamma-glutamyl-phosphate reductase (342 aa).

The active site involves Cys-149.

This sequence belongs to the NAGSA dehydrogenase family. Type 1 subfamily.

It is found in the cytoplasm. The catalysed reaction is N-acetyl-L-glutamate 5-semialdehyde + phosphate + NADP(+) = N-acetyl-L-glutamyl 5-phosphate + NADPH + H(+). Its pathway is amino-acid biosynthesis; L-arginine biosynthesis; N(2)-acetyl-L-ornithine from L-glutamate: step 3/4. Catalyzes the NADPH-dependent reduction of N-acetyl-5-glutamyl phosphate to yield N-acetyl-L-glutamate 5-semialdehyde. This is N-acetyl-gamma-glutamyl-phosphate reductase from Roseobacter denitrificans (strain ATCC 33942 / OCh 114) (Erythrobacter sp. (strain OCh 114)).